The following is a 121-amino-acid chain: Small ribosomal subunit protein uS13 (121 aa).

The segment at 94-121 is disordered; it reads GLPLRGQRTRTNARTRKGPRRAAQSLKK.

This sequence belongs to the universal ribosomal protein uS13 family. In terms of assembly, part of the 30S ribosomal subunit. Forms a loose heterodimer with protein S19. Forms two bridges to the 50S subunit in the 70S ribosome.

Located at the top of the head of the 30S subunit, it contacts several helices of the 16S rRNA. In the 70S ribosome it contacts the 23S rRNA (bridge B1a) and protein L5 of the 50S subunit (bridge B1b), connecting the 2 subunits; these bridges are implicated in subunit movement. Contacts the tRNAs in the A and P-sites. The sequence is that of Small ribosomal subunit protein uS13 from Paraburkholderia phytofirmans (strain DSM 17436 / LMG 22146 / PsJN) (Burkholderia phytofirmans).